We begin with the raw amino-acid sequence, 717 residues long: Amino-acid acetyltransferase, mitochondrial (717 aa).

Residues 1 to 23 constitute a mitochondrion transit peptide; sequence MFIWTKAPARGLGKASKILPKRD. A disordered region spans residues 35 to 70; sequence KQFHTATTSVRRSSSSAKERQRAERQQLTRLLKESP. Low complexity predominate over residues 39-50; the sequence is TATTSVRRSSSS. Residues 51–70 show a composition bias toward basic and acidic residues; it reads AKERQRAERQQLTRLLKESP. An N-acetyltransferase domain is found at 518-691; sequence NPSIELADDP…GDVDDAKKRD (174 aa).

This sequence belongs to the acetyltransferase family.

It localises to the mitochondrion. It carries out the reaction L-glutamate + acetyl-CoA = N-acetyl-L-glutamate + CoA + H(+). The protein operates within amino-acid biosynthesis; L-arginine biosynthesis; N(2)-acetyl-L-ornithine from L-glutamate: step 1/4. N-acetylglutamate synthase involved in arginine biosynthesis. This is Amino-acid acetyltransferase, mitochondrial (arg2) from Pyrenophora tritici-repentis (strain Pt-1C-BFP) (Wheat tan spot fungus).